The following is a 452-amino-acid chain: AP-4 complex subunit mu-1 (452 aa).

Residues 184 to 451 (KNEVFLDVVE…LSHSDAYVIR (268 aa)) form the MHD domain.

Belongs to the adaptor complexes medium subunit family. Adaptor protein complex 4 (AP-4) is a heterotetramer composed of two large adaptins (epsilon-type subunit AP4E1 and beta-type subunit AP4B1), a medium adaptin (mu-type subunit AP4M1) and a small adaptin (sigma-type AP4S1). Interacts with tyrosine-based sorting signals on the cytoplasmic tail of cargo proteins such as APP, ATG9A, LAMP2 and NAGPA. Interacts with the C-terminal domain of GRID2. Interacts with GRIA1 and GRIA2; the interaction is indirect via CACNG3. Interacts with CACNG3; CACNG3 associates GRIA1 and GRIA2 with the adaptor protein complex 4 (AP-4) to target them to the somatodendritic compartment of neurons. Interacts with HOOK1 and HOOK2; the interactions are direct, mediate the interaction between FTS-Hook-FHIP (FHF) complex and AP-4 and the perinuclear distribution of AP-4.

It localises to the golgi apparatus. The protein resides in the trans-Golgi network membrane. The protein localises to the early endosome. Its function is as follows. Component of the adaptor protein complex 4 (AP-4). Adaptor protein complexes are vesicle coat components involved both in vesicle formation and cargo selection. They control the vesicular transport of proteins in different trafficking pathways. AP-4 forms a non clathrin-associated coat on vesicles departing the trans-Golgi network (TGN) and may be involved in the targeting of proteins from the trans-Golgi network (TGN) to the endosomal-lysosomal system. It is also involved in protein sorting to the basolateral membrane in epithelial cells and the proper asymmetric localization of somatodendritic proteins in neurons. Within AP-4, the mu-type subunit AP4M1 is directly involved in the recognition and binding of tyrosine-based sorting signals found in the cytoplasmic part of cargos. The adaptor protein complex 4 (AP-4) may also recognize other types of sorting signal. The polypeptide is AP-4 complex subunit mu-1 (Bos taurus (Bovine)).